The chain runs to 383 residues: S-adenosylmethionine synthase (383 aa).

Histidine 15 is a binding site for ATP. Mg(2+) is bound at residue aspartate 17. Glutamate 43 serves as a coordination point for K(+). 2 residues coordinate L-methionine: glutamate 56 and glutamine 99. The segment at 99–109 is flexible loop; that stretch reads QSPDINQGVDR. ATP-binding positions include 164 to 166, 230 to 231, aspartate 239, 245 to 246, alanine 262, and lysine 266; these read DAK, RF, and RK. Aspartate 239 is an L-methionine binding site. Position 270 (lysine 270) interacts with L-methionine.

Belongs to the AdoMet synthase family. In terms of assembly, homotetramer; dimer of dimers. The cofactor is Mg(2+). K(+) is required as a cofactor.

The protein localises to the cytoplasm. It carries out the reaction L-methionine + ATP + H2O = S-adenosyl-L-methionine + phosphate + diphosphate. It participates in amino-acid biosynthesis; S-adenosyl-L-methionine biosynthesis; S-adenosyl-L-methionine from L-methionine: step 1/1. In terms of biological role, catalyzes the formation of S-adenosylmethionine (AdoMet) from methionine and ATP. The overall synthetic reaction is composed of two sequential steps, AdoMet formation and the subsequent tripolyphosphate hydrolysis which occurs prior to release of AdoMet from the enzyme. This chain is S-adenosylmethionine synthase, found in Shewanella sp. (strain ANA-3).